The primary structure comprises 509 residues: Transmembrane protein 180 (509 aa).

The Extracellular portion of the chain corresponds to 1 to 10; the sequence is MGLRLLACLF. A helical membrane pass occupies residues 11–42; the sequence is HLPTAVIYGSLSLFVSILHNVFLLYYVDTFVS. Topologically, residues 43–54 are cytoplasmic; the sequence is VYKIDKLSFWIG. A helical membrane pass occupies residues 55 to 73; that stretch reads ETVFLIWNSLNDPLFGWLS. At 74–98 the chain is on the extracellular side; sequence DRVFLSTQQPGAEISSPEVVLKRLR. Residues 99–116 form a helical membrane-spanning segment; that stretch reads ALSHNGPLFAISFLAFWV. Residues 117-124 are Cytoplasmic-facing; it reads AWAHPGLQ. Residues 125–149 traverse the membrane as a helical segment; the sequence is FLLCLCMYDSFLTMVDLHHNALLAD. Topologically, residues 150-153 are extracellular; that stretch reads LAVS. A helical membrane pass occupies residues 154–177; the sequence is AKDRTSLNFYCSFFSAIGSLSVFM. Residues 178-189 lie on the Cytoplasmic side of the membrane; it reads SYAVWNKEDFFS. A helical membrane pass occupies residues 190–221; the sequence is FRIFCIVLAFCSIVGFTLSTQLLRQRFETDGK. Topologically, residues 222–259 are extracellular; sequence AKWDQESTLKELYIEKLSVPQEKRITLVEYLQQLSRHR. Residues 260-287 form a helical membrane-spanning segment; sequence NFLWFVCMNLIQVFHCHFNSNFFPLFLE. Over 288–300 the chain is Cytoplasmic; sequence HLLSDKISVSTGS. The helical transmembrane segment at 301–320 threads the bilayer; it reads FLLGISYIAPHLNNLYFLSL. The Extracellular portion of the chain corresponds to 321-325; sequence CRRWG. Residues 326–345 traverse the membrane as a helical segment; it reads VYAVVRGLFFLKLALSVVML. Over 346–353 the chain is Cytoplasmic; the sequence is LAGPDQVY. Residues 354–388 form a helical membrane-spanning segment; it reads LLCIFIASNRVFTEGTCKLLNLVVTDLVDEDLVLN. Over 389 to 397 the chain is Extracellular; that stretch reads RRKQAASAL. Residues 398-424 traverse the membrane as a helical segment; that stretch reads LFGMVALVTKPGQTFAPLIGTWLLCVY. Topologically, residues 425–458 are cytoplasmic; sequence TGYDIFQRNPLSNVVSAQPKLESDTILEPTLRQG. A helical transmembrane segment spans residues 459 to 477; sequence CFYLLVFVPITCALLQLLS. The Extracellular segment spans residues 478–509; sequence WTQFSLHGKRLQMVKAQRQGLMQGRAPEIKMI.

The protein resides in the cell membrane. The protein is Transmembrane protein 180 of Gallus gallus (Chicken).